The primary structure comprises 279 residues: Movement protein (279 aa).

Belongs to the cucumovirus movement protein family.

Its subcellular location is the host cell junction. It is found in the host plasmodesma. Its function is as follows. Transports viral genome to neighboring plant cells directly through plasmosdesmata, without any budding. The movement protein allows efficient cell to cell propagation, by bypassing the host cell wall barrier. Acts by forming a tubular structure at the host plasmodesmata, enlarging it enough to allow free passage of virion capsids. The polypeptide is Movement protein (Cucumber mosaic virus (strain Ixora) (CMV)).